The chain runs to 258 residues: Venom plasminogen activator Haly-PA (258 aa).

The first 18 residues, 1–18, serve as a signal peptide directing secretion; it reads MALIRVLANLLILQLSYA. Residues 19–24 constitute a propeptide that is removed on maturation; that stretch reads QKSSEL. One can recognise a Peptidase S1 domain in the interval 25-249; that stretch reads VVGGDECNIN…HLDWIKSIIA (225 aa). 6 disulfides stabilise this stretch: C31–C163, C50–C66, C98–C256, C142–C210, C174–C189, and C200–C225. N44 carries an N-linked (GlcNAc...) asparagine glycan. Active-site charge relay system residues include H65 and D110. The active-site Charge relay system is the S204.

Belongs to the peptidase S1 family. Snake venom subfamily. Monomer. Post-translationally, glycosylated. As to expression, expressed by the venom gland.

It localises to the secreted. Its function is as follows. Snake venom serine protease that activates plasminogen. Displays indirect fibrino(geno)lytic activity through conversion of plasminogen to plasmin. Shows a preferential cleavage at Arg-|-Xaa instead of Lys-|-Xaa bonds. The polypeptide is Venom plasminogen activator Haly-PA (Gloydius brevicauda (Korean slamosa snake)).